A 172-amino-acid chain; its full sequence is Bcl-2-related protein A1 (172 aa).

The BH1 signature appears at 77–97; that stretch reads KEFEDGIINWGRIVTIFAFGG. Residues 132–147 carry the BH2 motif; sequence EWIRQNGGWEDGFIKK.

This sequence belongs to the Bcl-2 family. Interacts directly with BCL2L11/BIM and PMAIP1. Interacts directly with BAK1, BID, BMF and BBC3. Interacts with BOP. Interacts with isoform 3, isoform 4 and isoform 5 of ING4. Interacts with UBQLN4. Expressed in hemopoietic tissues, including bone marrow, spleen and thymus.

It is found in the cytoplasm. Retards apoptosis induced by IL-3 deprivation. May function in the response of hemopoietic cells to external signals and in maintaining endothelial survival during infection. Can inhibit apoptosis induced by serum starvation in the mammary epithelial cell line HC11. This chain is Bcl-2-related protein A1 (Bcl2a1), found in Mus musculus (Mouse).